The following is a 199-amino-acid chain: dITP/XTP pyrophosphatase (199 aa).

Residue threonine 7–lysine 12 coordinates substrate. The active-site Proton acceptor is aspartate 68. Aspartate 68 is a Mg(2+) binding site. Residues serine 69, phenylalanine 153 to aspartate 156, lysine 176, and histidine 181 to arginine 182 contribute to the substrate site.

The protein belongs to the HAM1 NTPase family. As to quaternary structure, homodimer. Mg(2+) serves as cofactor.

The enzyme catalyses XTP + H2O = XMP + diphosphate + H(+). The catalysed reaction is dITP + H2O = dIMP + diphosphate + H(+). It catalyses the reaction ITP + H2O = IMP + diphosphate + H(+). Its function is as follows. Pyrophosphatase that catalyzes the hydrolysis of nucleoside triphosphates to their monophosphate derivatives, with a high preference for the non-canonical purine nucleotides XTP (xanthosine triphosphate), dITP (deoxyinosine triphosphate) and ITP. Seems to function as a house-cleaning enzyme that removes non-canonical purine nucleotides from the nucleotide pool, thus preventing their incorporation into DNA/RNA and avoiding chromosomal lesions. In Halorhodospira halophila (strain DSM 244 / SL1) (Ectothiorhodospira halophila (strain DSM 244 / SL1)), this protein is dITP/XTP pyrophosphatase.